A 435-amino-acid chain; its full sequence is tRNA(Ile)-lysidine synthase (435 aa).

23–28 lines the ATP pocket; it reads SGGMDS.

This sequence belongs to the tRNA(Ile)-lysidine synthase family.

The protein localises to the cytoplasm. It catalyses the reaction cytidine(34) in tRNA(Ile2) + L-lysine + ATP = lysidine(34) in tRNA(Ile2) + AMP + diphosphate + H(+). Its function is as follows. Ligates lysine onto the cytidine present at position 34 of the AUA codon-specific tRNA(Ile) that contains the anticodon CAU, in an ATP-dependent manner. Cytidine is converted to lysidine, thus changing the amino acid specificity of the tRNA from methionine to isoleucine. This chain is tRNA(Ile)-lysidine synthase, found in Xanthomonas campestris pv. campestris (strain 8004).